Here is a 525-residue protein sequence, read N- to C-terminus: MAFASLLHHIWNHAVDCAEQLTWWQTIVSFIIFCIMCSWLPGNGEMRAPFVGYRWPFEPTFWVRMRFIFQSLGMMTEGYSKFKDSMFKITTNDADWLVLSQRYLDDLQSLPAERLSHTDALVTMWGSSHSPFALLNKSDLSSRALRDVVAPNYAKDLDSLVDELRYSLEHDIDIQDDWKPIDALELSSKLVLRISQRILIGWPMSRDQELLECAQGYADAATVVQFALKLLPRQIRPLVYPLLPQAWATKSWIRRCDKILAKEMQRRQVLEKSDPVYEKPKDLLQGMVDLEPSRPVDKLGHDFLVQALISRMAPVVTMAQTLVDLALHPEDIEELRDEVLQVIGPDGAGLGNLRQSFTKLDKMDSVLRESARFTPLSMMTMHRRVQDAKGITLHDGVHLPRGTHVAFPAYHIGRDPKLVSGADIYDGLRWYRKDLGEAQENEAPKHRFVTPDSNYLTFGSGKYVCPGRFIAEHMLKLMMTAVLLRYEFKWPPGVPVPEQQYRHVFAYPSKTTLLIKRRKDGDQIL.

The chain crosses the membrane as a helical span at residues 21–43; the sequence is LTWWQTIVSFIIFCIMCSWLPGN. N-linked (GlcNAc...) asparagine glycosylation is present at Asn-136. Cys-465 contacts heme.

It belongs to the cytochrome P450 family. Requires heme as cofactor.

The protein localises to the membrane. The protein operates within secondary metabolite biosynthesis. Its function is as follows. Cytochrome P450 monooxygenase; part of the gene clusters that mediates the biosynthesis of lolitrems, indole-diterpene mycotoxins that are potent tremorgens in mammals, and are synthesized by clavicipitaceous fungal endophytes in association with their grass hosts. The geranylgeranyl diphosphate (GGPP) synthase ltmG is proposed to catalyze the first step in lolitrem biosynthesis. LtmG catalyzes a series of iterative condensations of isopentenyl diphosphate (IPP) with dimethylallyl diphosphate (DMAPP), geranyl diphosphate (GPP), and farnesyl diphosphate (FPP), to form GGPP. GGPP then condenses with indole-3-glycerol phosphate to form 3-geranylgeranylindole, an acyclic intermediate, to be incorporated into paxilline. Either ltmG or ltmC could be responsible for this step, as both are putative prenyl transferases. The FAD-dependent monooxygenase ltmM then catalyzes the epoxidation of the two terminal alkenes of the geranylgeranyl moiety, which is subsequently cyclized by ltmB, to paspaline. The cytochrome P450 monooxygenases ltmQ and ltmP can sequentially oxidize paspaline to terpendole E and terpendole F. Alternatively, ltmP converts paspaline to an intermediate which is oxidized by ltmQ to terpendole F. LtmF, ltmK, ltmE and ltmJ appear to be unique to the epichloe endophytes. The prenyltransferase ltmF is involved in the 27-hydroxyl-O-prenylation. The cytochrome P450 monooxygenase ltmK is required for the oxidative acetal ring formation. The multi-functional prenyltransferase ltmE is required for C20- and C21-prenylations of the indole ring of paspalanes and acts together with the cytochrome P450 monooxygenase ltmJ to yield lolitremanes by multiple oxidations and ring closures. The stereoisomer pairs of lolitriol and lolitrem N or lolitrem B and lolitrem F may be attributed to variations in the way in which ring closure can occur under the action of ltmJ. While the major product of this pathway is lolitrem B, the prenyl transferases and cytochrome P450 monooxygenases identified in this pathway have a remarkable versatility in their regio- and stereo-specificities to generate a diverse range of metabolites that are products of a metabolic grid rather than a linear pathway. In Epichloe festucae var. lolii (Neotyphodium lolii), this protein is Cytochrome P450 monooxygenase ltmJ (ltmJ).